The chain runs to 73 residues: Large ribosomal subunit protein uL29 (73 aa).

It belongs to the universal ribosomal protein uL29 family.

The protein is Large ribosomal subunit protein uL29 (rpl29) of Saccharolobus solfataricus (strain ATCC 35092 / DSM 1617 / JCM 11322 / P2) (Sulfolobus solfataricus).